The sequence spans 298 residues: Acetylglutamate kinase (298 aa).

Substrate is bound by residues glycine 68–glycine 69, arginine 90, and asparagine 195.

The protein belongs to the acetylglutamate kinase family. ArgB subfamily.

The protein localises to the cytoplasm. It carries out the reaction N-acetyl-L-glutamate + ATP = N-acetyl-L-glutamyl 5-phosphate + ADP. It functions in the pathway amino-acid biosynthesis; L-arginine biosynthesis; N(2)-acetyl-L-ornithine from L-glutamate: step 2/4. Its function is as follows. Catalyzes the ATP-dependent phosphorylation of N-acetyl-L-glutamate. The polypeptide is Acetylglutamate kinase (Hydrogenovibrio crunogenus (strain DSM 25203 / XCL-2) (Thiomicrospira crunogena)).